An 82-amino-acid polypeptide reads, in one-letter code: Small ribosomal subunit protein uS15 (82 aa).

The protein belongs to the universal ribosomal protein uS15 family. Part of the 30S ribosomal subunit. Forms a bridge to the 50S subunit in the 70S ribosome, contacting the 23S rRNA.

One of the primary rRNA binding proteins, it binds directly to 16S rRNA where it helps nucleate assembly of the platform of the 30S subunit by binding and bridging several RNA helices of the 16S rRNA. Functionally, forms an intersubunit bridge (bridge B4) with the 23S rRNA of the 50S subunit in the ribosome. This is Small ribosomal subunit protein uS15 from Pelagibacter ubique (strain HTCC1062).